The chain runs to 368 residues: Cytochrome b (368 aa).

4 consecutive transmembrane segments (helical) span residues 25-45 (FGSM…FLAM), 69-90 (WIMQ…YIHI), 105-125 (WLSG…GYVL), and 170-190 (FFAL…IHII). His-75 and His-89 together coordinate heme b. Positions 174 and 188 each coordinate heme b. Residue His-193 coordinates a ubiquinone. Transmembrane regions (helical) follow at residues 218 to 238 (YKDM…MSFT), 280 to 300 (LGGT…PFTH), 312 to 332 (LTQT…WTAT), and 339 to 358 (FIFI…IINP).

It belongs to the cytochrome b family. As to quaternary structure, the cytochrome bc1 complex contains 3 respiratory subunits (MT-CYB, CYC1 and UQCRFS1), 2 core proteins (UQCRC1 and UQCRC2) and probably 6 low-molecular weight proteins. Heme b is required as a cofactor.

The protein resides in the mitochondrion inner membrane. In terms of biological role, component of the ubiquinol-cytochrome c reductase complex (complex III or cytochrome b-c1 complex) that is part of the mitochondrial respiratory chain. The b-c1 complex mediates electron transfer from ubiquinol to cytochrome c. Contributes to the generation of a proton gradient across the mitochondrial membrane that is then used for ATP synthesis. The protein is Cytochrome b (MT-CYB) of Notechis ater (Black tiger snake).